The primary structure comprises 263 residues: MRVAVSGFKGRMGHEVVKTVLREADLELVAVLDHEPKEKNINEIVEFSSLDVPVFGNLSEMLEEIKPDCVVDFTTPKVGYSNTKTILEHGVRAVVGTTGFTPEQISELRSIAESKKIGALIAPNFAVGAVLMMQFAQKAAKYFPNVEIIELHHDNKLDAPSGTAVKTAEMMTETREFVKQGAADEVELIEGARGAEYEGMRIHSVRLPGLVAHQEVIFGAEGQGLTIRHDSYDRISFMSGVALSVRKTKELETLIYGLENILD.

NAD(+) contacts are provided by residues 7-12 (GFKGRM), 96-98 (GTT), and 122-125 (APNF). Histidine 152 serves as the catalytic Proton donor/acceptor. Histidine 153 provides a ligand contact to (S)-2,3,4,5-tetrahydrodipicolinate. Lysine 156 acts as the Proton donor in catalysis. 162–163 (GT) contacts (S)-2,3,4,5-tetrahydrodipicolinate.

Belongs to the DapB family.

The protein localises to the cytoplasm. The catalysed reaction is (S)-2,3,4,5-tetrahydrodipicolinate + NAD(+) + H2O = (2S,4S)-4-hydroxy-2,3,4,5-tetrahydrodipicolinate + NADH + H(+). It catalyses the reaction (S)-2,3,4,5-tetrahydrodipicolinate + NADP(+) + H2O = (2S,4S)-4-hydroxy-2,3,4,5-tetrahydrodipicolinate + NADPH + H(+). It participates in amino-acid biosynthesis; L-lysine biosynthesis via DAP pathway; (S)-tetrahydrodipicolinate from L-aspartate: step 4/4. Catalyzes the conversion of 4-hydroxy-tetrahydrodipicolinate (HTPA) to tetrahydrodipicolinate. This chain is 4-hydroxy-tetrahydrodipicolinate reductase, found in Listeria monocytogenes serotype 4b (strain CLIP80459).